A 301-amino-acid polypeptide reads, in one-letter code: 4-hydroxy-tetrahydrodipicolinate synthase (301 aa).

T55 lines the pyruvate pocket. The Proton donor/acceptor role is filled by Y143. K171 acts as the Schiff-base intermediate with substrate in catalysis. A pyruvate-binding site is contributed by I213.

Belongs to the DapA family. In terms of assembly, homotetramer; dimer of dimers.

It localises to the cytoplasm. The enzyme catalyses L-aspartate 4-semialdehyde + pyruvate = (2S,4S)-4-hydroxy-2,3,4,5-tetrahydrodipicolinate + H2O + H(+). It functions in the pathway amino-acid biosynthesis; L-lysine biosynthesis via DAP pathway; (S)-tetrahydrodipicolinate from L-aspartate: step 3/4. Functionally, catalyzes the condensation of (S)-aspartate-beta-semialdehyde [(S)-ASA] and pyruvate to 4-hydroxy-tetrahydrodipicolinate (HTPA). This Psychrobacter arcticus (strain DSM 17307 / VKM B-2377 / 273-4) protein is 4-hydroxy-tetrahydrodipicolinate synthase.